Consider the following 926-residue polypeptide: DNA mismatch repair protein MutS (926 aa).

A disordered region spans residues methionine 1–asparagine 60. Residues aspartate 20 to glutamate 31 are compositionally biased toward basic and acidic residues. Glycine 726–serine 733 contacts ATP.

It belongs to the DNA mismatch repair MutS family.

In terms of biological role, this protein is involved in the repair of mismatches in DNA. It is possible that it carries out the mismatch recognition step. This protein has a weak ATPase activity. This chain is DNA mismatch repair protein MutS, found in Prochlorococcus marinus (strain NATL2A).